The chain runs to 253 residues: MLIEQFICREDNFGVLIHDERSGYTAAIDAPESKAICSALKRRNWTLQTIFVTHHHHDHIEALAELKQIYKAVVIGPEAEKEKIGHLDQALQPDESLFFGTHTLLALSTPGHTLGSLSYYFPQENLLFSGDTLFSLGCGRLFEGTPAQMLNSFKKLRQLPDETLLYCGHEYTKTNALFALTLDSHNQKLHQRVEDVFLLRAKNAMTLPVTLGQEKATNPFLRWDDRTLRKNLAMEKETDEEVFAEIRKRKDNF.

Positions 54, 56, 58, 59, 112, 131, and 169 each coordinate Zn(2+).

Belongs to the metallo-beta-lactamase superfamily. Glyoxalase II family. As to quaternary structure, monomer. The cofactor is Zn(2+).

The enzyme catalyses an S-(2-hydroxyacyl)glutathione + H2O = a 2-hydroxy carboxylate + glutathione + H(+). Its pathway is secondary metabolite metabolism; methylglyoxal degradation; (R)-lactate from methylglyoxal: step 2/2. In terms of biological role, thiolesterase that catalyzes the hydrolysis of S-D-lactoyl-glutathione to form glutathione and D-lactic acid. The sequence is that of Hydroxyacylglutathione hydrolase from Bartonella quintana (strain Toulouse) (Rochalimaea quintana).